A 272-amino-acid chain; its full sequence is Elongation factor Ts (272 aa).

The segment at 86–89 (TDFV) is involved in Mg(2+) ion dislocation from EF-Tu.

Belongs to the EF-Ts family.

The protein resides in the cytoplasm. In terms of biological role, associates with the EF-Tu.GDP complex and induces the exchange of GDP to GTP. It remains bound to the aminoacyl-tRNA.EF-Tu.GTP complex up to the GTP hydrolysis stage on the ribosome. This chain is Elongation factor Ts, found in Blochmanniella pennsylvanica (strain BPEN).